The primary structure comprises 36 residues: Photosystem I reaction center subunit VIII (36 aa).

Residues 9–29 (IFVPLVGLVFPAVAMASLFLY) form a helical membrane-spanning segment.

Belongs to the PsaI family.

It localises to the plastid. It is found in the chloroplast thylakoid membrane. Functionally, may help in the organization of the PsaL subunit. This is Photosystem I reaction center subunit VIII from Ostreococcus tauri.